Reading from the N-terminus, the 137-residue chain is Large ribosomal subunit protein uL16 (137 aa).

The protein belongs to the universal ribosomal protein uL16 family. As to quaternary structure, part of the 50S ribosomal subunit.

Its function is as follows. Binds 23S rRNA and is also seen to make contacts with the A and possibly P site tRNAs. The chain is Large ribosomal subunit protein uL16 from Streptococcus thermophilus (strain ATCC BAA-491 / LMD-9).